A 294-amino-acid chain; its full sequence is Phosphonoacetaldehyde hydrolase (294 aa).

Asp19 functions as the Nucleophile in the catalytic mechanism. Residues Asp19 and Ala21 each contribute to the Mg(2+) site. The Schiff-base intermediate with substrate role is filled by Lys60. Asp193 serves as a coordination point for Mg(2+).

Belongs to the HAD-like hydrolase superfamily. PhnX family. In terms of assembly, homodimer. The cofactor is Mg(2+).

The enzyme catalyses phosphonoacetaldehyde + H2O = acetaldehyde + phosphate + H(+). Functionally, involved in phosphonate degradation. This is Phosphonoacetaldehyde hydrolase from Hahella chejuensis (strain KCTC 2396).